The primary structure comprises 119 residues: Integration host factor subunit beta (119 aa).

Positions 91–119 (DLVGNDQGDDSSNGSSDPLQSVMDMHAMH) are disordered. The span at 94 to 107 (GNDQGDDSSNGSSD) shows a compositional bias: low complexity.

The protein belongs to the bacterial histone-like protein family. As to quaternary structure, heterodimer of an alpha and a beta chain.

This protein is one of the two subunits of integration host factor, a specific DNA-binding protein that functions in genetic recombination as well as in transcriptional and translational control. The chain is Integration host factor subunit beta from Bordetella parapertussis (strain 12822 / ATCC BAA-587 / NCTC 13253).